The sequence spans 139 residues: Large ribosomal subunit protein uL16 (139 aa).

Residues 1–20 (MLIPRRVKHRKQHHPKRRGQ) show a composition bias toward basic residues. The disordered stretch occupies residues 1-25 (MLIPRRVKHRKQHHPKRRGQAKGGT).

Belongs to the universal ribosomal protein uL16 family. As to quaternary structure, part of the 50S ribosomal subunit.

Binds 23S rRNA and is also seen to make contacts with the A and possibly P site tRNAs. This chain is Large ribosomal subunit protein uL16, found in Streptomyces avermitilis (strain ATCC 31267 / DSM 46492 / JCM 5070 / NBRC 14893 / NCIMB 12804 / NRRL 8165 / MA-4680).